Reading from the N-terminus, the 211-residue chain is Endo-1,4-beta-xylanase 4 (211 aa).

Positions 1–16 (MKVTAAFAGLLVTAFA) are cleaved as a signal peptide. Positions 19 to 210 (VPEPVLVSRS…GACSASVTIS (192 aa)) constitute a GH11 domain. Residue N101 is glycosylated (N-linked (GlcNAc...) asparagine). The active-site Nucleophile is E106. E197 serves as the catalytic Proton donor.

This sequence belongs to the glycosyl hydrolase 11 (cellulase G) family.

It localises to the secreted. The enzyme catalyses Endohydrolysis of (1-&gt;4)-beta-D-xylosidic linkages in xylans.. The protein operates within glycan degradation; xylan degradation. In terms of biological role, endo-1,4-beta-xylanase involved in the hydrolysis of xylan, a major structural heterogeneous polysaccharide found in plant biomass representing the second most abundant polysaccharide in the biosphere, after cellulose. This chain is Endo-1,4-beta-xylanase 4 (XYN4), found in Aspergillus niger.